Here is a 319-residue protein sequence, read N- to C-terminus: Beta-xylosidase (319 aa).

D14 acts as the Proton acceptor in catalysis. E222 acts as the Proton donor in catalysis.

Belongs to the glycosyl hydrolase 43 family.

It carries out the reaction Hydrolysis of (1-&gt;4)-beta-D-xylans, to remove successive D-xylose residues from the non-reducing termini.. In terms of biological role, exoxylanase capable of acting on certain xylans and xylooligosaccharides. This chain is Beta-xylosidase (xynB), found in Xylanibacter ruminicola (Prevotella ruminicola).